The sequence spans 221 residues: Large ribosomal subunit protein uL1 (221 aa).

Belongs to the universal ribosomal protein uL1 family. As to quaternary structure, part of the 50S ribosomal subunit.

Its function is as follows. Probably involved in E site tRNA release. Binds directly to 23S rRNA. Protein L1 is also a translational repressor protein, it controls the translation of its operon by binding to its mRNA. The sequence is that of Large ribosomal subunit protein uL1 from Sulfolobus acidocaldarius (strain ATCC 33909 / DSM 639 / JCM 8929 / NBRC 15157 / NCIMB 11770).